We begin with the raw amino-acid sequence, 397 residues long: Phosphoglycerate kinase (397 aa).

Substrate contacts are provided by residues 21–23, arginine 37, 60–63, arginine 119, and arginine 152; these read DFN and HLGR. Residues lysine 203, glycine 294, glutamate 325, and 354–357 contribute to the ATP site; that span reads GGDS.

Belongs to the phosphoglycerate kinase family. In terms of assembly, monomer.

Its subcellular location is the cytoplasm. The catalysed reaction is (2R)-3-phosphoglycerate + ATP = (2R)-3-phospho-glyceroyl phosphate + ADP. Its pathway is carbohydrate degradation; glycolysis; pyruvate from D-glyceraldehyde 3-phosphate: step 2/5. This Chlorobium phaeobacteroides (strain DSM 266 / SMG 266 / 2430) protein is Phosphoglycerate kinase.